The chain runs to 185 residues: Large ribosomal subunit protein bL25 (185 aa).

This sequence belongs to the bacterial ribosomal protein bL25 family. CTC subfamily. Part of the 50S ribosomal subunit; part of the 5S rRNA/L5/L18/L25 subcomplex. Contacts the 5S rRNA. Binds to the 5S rRNA independently of L5 and L18.

In terms of biological role, this is one of the proteins that binds to the 5S RNA in the ribosome where it forms part of the central protuberance. The sequence is that of Large ribosomal subunit protein bL25 from Chlamydia caviae (strain ATCC VR-813 / DSM 19441 / 03DC25 / GPIC) (Chlamydophila caviae).